A 708-amino-acid polypeptide reads, in one-letter code: Prolyl 3-hydroxylase 2 (708 aa).

Positions 1-24 are cleaved as a signal peptide; it reads MRERIWAPPLLLLLPLLLPPPLWG. 4 TPR repeats span residues 44 to 77, 148 to 181, 210 to 243, and 306 to 339; these read FDLL…HRRL, RVPY…NPEH, HMES…YFVE, and PLHY…HPDD. N-linked (GlcNAc...) asparagine glycosylation is found at N449 and N549. A Fe2OG dioxygenase domain is found at 557–671; that stretch reads THMVCRTALS…RCAVALWFTL (115 aa). Residues H580, D582, and H652 each coordinate Fe cation. R662 is an active-site residue. A Prevents secretion from ER motif is present at residues 705–708; sequence KDEL.

It belongs to the leprecan family. It depends on Fe cation as a cofactor. The cofactor is L-ascorbate. As to expression, expression localized to the epithelia of bile ducts and to the sacroplasm of heart muscle and skeletal muscle. In the pancreas, localized to a subpopulation of Langerhans islet cells and in the salivary gland, expressed in acinar cells (at protein level). Expressed in adult heart, placenta, lung, liver, skeletal muscle and kidney. Detected in fetal heart, spleen, lung, liver skeletal muscle and kidney.

The protein resides in the endoplasmic reticulum. Its subcellular location is the sarcoplasmic reticulum. It localises to the golgi apparatus. It carries out the reaction L-prolyl-[collagen] + 2-oxoglutarate + O2 = trans-3-hydroxy-L-prolyl-[collagen] + succinate + CO2. With respect to regulation, inhibited by pyridine 2,4-dicarboxylate, an analog of 2-oxoglutarate. Its function is as follows. Prolyl 3-hydroxylase that catalyzes the post-translational formation of 3-hydroxyproline on collagens. Contributes to proline 3-hydroxylation of collagen COL4A1 and COL1A1 in tendons, the eye sclera and in the eye lens capsule. Has high activity with the type IV collagen COL4A1, and lower activity with COL1A1. Catalyzes hydroxylation of the first Pro in Gly-Pro-Hyp sequences where Hyp is 4-hydroxyproline. Has no activity on substrates that lack 4-hydroxyproline in the third position. This chain is Prolyl 3-hydroxylase 2, found in Homo sapiens (Human).